The chain runs to 125 residues: Small ribosomal subunit protein uS13 (125 aa).

This sequence belongs to the universal ribosomal protein uS13 family. As to quaternary structure, part of the 30S ribosomal subunit. Forms a loose heterodimer with protein S19. Forms two bridges to the 50S subunit in the 70S ribosome.

Its function is as follows. Located at the top of the head of the 30S subunit, it contacts several helices of the 16S rRNA. In the 70S ribosome it contacts the 23S rRNA (bridge B1a) and protein L5 of the 50S subunit (bridge B1b), connecting the 2 subunits; these bridges are implicated in subunit movement. Contacts the tRNAs in the A and P-sites. In Gluconobacter oxydans (strain 621H) (Gluconobacter suboxydans), this protein is Small ribosomal subunit protein uS13.